The following is a 435-amino-acid chain: Eukaryotic peptide chain release factor subunit 1-3 (435 aa).

An N-acetylalanine modification is found at Ala2.

The protein belongs to the eukaryotic release factor 1 family. As to quaternary structure, heterodimer of two subunits, one of which binds GTP.

Its subcellular location is the cytoplasm. Its function is as follows. Directs the termination of nascent peptide synthesis (translation) in response to the termination codons UAA, UAG and UGA. Modulates plant growth and development. This Arabidopsis thaliana (Mouse-ear cress) protein is Eukaryotic peptide chain release factor subunit 1-3 (ERF1-3).